The sequence spans 365 residues: DNA replication and repair protein RecF (365 aa).

Residue 30–37 participates in ATP binding; it reads GLNAQGKT.

This sequence belongs to the RecF family.

Its subcellular location is the cytoplasm. Its function is as follows. The RecF protein is involved in DNA metabolism; it is required for DNA replication and normal SOS inducibility. RecF binds preferentially to single-stranded, linear DNA. It also seems to bind ATP. This chain is DNA replication and repair protein RecF, found in Chlamydia trachomatis serovar A (strain ATCC VR-571B / DSM 19440 / HAR-13).